Reading from the N-terminus, the 718-residue chain is Heme peroxidase 2 (718 aa).

The first 19 residues, 1-19, serve as a signal peptide directing secretion; that stretch reads MNLKPTILLFTILFLKCAT. Positions 20–146 are excised as a propeptide; it reads FEVNEETERI…QANRRCSSPP (127 aa). 2 disordered regions span residues 41–64 and 108–144; these read RASE…ANSD and LLQS…RCSS. Residues 45–64 show a composition bias toward polar residues; it reads NSESEQTSQHIIVSQQANSD. Residues 109–118 show a composition bias toward low complexity; the sequence is LQSSETTTTT. A compositionally biased stretch (basic residues) spans 126–139; it reads SKRSAIFRSKRQAN. The cysteines at positions 149 and 164 are disulfide-linked. H241 (proton acceptor) is an active-site residue. D242 is a Ca(2+) binding site. An intrachain disulfide couples C262 to C272. Ca(2+)-binding residues include S311, F313, D315, and S317. N354 carries N-linked (GlcNAc...) asparagine glycosylation. A disulfide bond links C358 and C366. Position 477 (H477) interacts with heme b. 4 N-linked (GlcNAc...) asparagine glycosylation sites follow: N551, N592, N662, and N673. Residues C682 and C705 are joined by a disulfide bond.

This sequence belongs to the peroxidase family. Heme b serves as cofactor. Expressed in the hypodermis and gland cells of the pharynx. Specifically, there is low and transient expression from the distal bulb of the pharynx to the anterior of the buccal cavity. Whole body expression levels increase upon entry into the dauer phase.

The protein resides in the secreted. The catalysed reaction is 2 a phenolic donor + H2O2 = 2 a phenolic radical donor + 2 H2O. Functionally, peroxidase which is involved in maintaining the cuticle integrity in the hypodermis and pharynx. It thus plays a role in conferring resistance against Gram-positive bacteria such as E.faecalis, S.aureus and C.diphtheriae, and yeast such as C.albicans. The chain is Heme peroxidase 2 from Caenorhabditis elegans.